Consider the following 654-residue polypeptide: Pentatricopeptide repeat-containing protein At5g61400 (654 aa).

PPR repeat units follow at residues 37 to 71, 74 to 104, 131 to 161, 163 to 197, 198 to 232, 233 to 267, 268 to 302, 303 to 337, 338 to 372, 373 to 407, 408 to 442, 443 to 477, 478 to 512, 513 to 543, 548 to 582, and 583 to 617; these read SSFS…RVSK, DLQS…LIER, SIGV…MKCS, DSKA…GLVP, DVHI…GIKP, NVYI…GVLP, NLYT…ELLP, NVVV…GVDP, NLYV…NLSP, DVFT…RIFP, SSAT…GVEP, NIIT…GIVP, DVVT…GIHP, NDHT…NNQQ, NHVG…GITP, and DICS…GILP.

It belongs to the PPR family. P subfamily.

This is Pentatricopeptide repeat-containing protein At5g61400 from Arabidopsis thaliana (Mouse-ear cress).